The chain runs to 1045 residues: B3 domain-containing protein REM13 (1045 aa).

The TF-B3 1 DNA-binding region spans 7 to 96 (YPQFFHTLVP…VFHVSNLGPN (90 aa)). The tract at residues 121-147 (NNGDVCDSEELPKEKKAKTNSEEADAV) is disordered. Basic and acidic residues predominate over residues 130–141 (ELPKEKKAKTNS). DNA-binding regions (TF-B3) lie at residues 157–253 (CFMA…FCPT) and 305–398 (FVTF…CSPE). A disordered region spans residues 423–449 (NRDKISNNDKEENMSWERKKDHLKSRD). Residues 474-570 (SNDSCLVVVS…TPVLSLCPAD (97 aa)) constitute a DNA-binding region (TF-B3 4). A disordered region spans residues 606-625 (IKDDNSKEKNDKEESKSVDG). DNA-binding regions (TF-B3) lie at residues 643–738 (FVTL…LRTE), 815–910 (FVTF…LRTK), and 940–1035 (FVTL…LKFS).

It is found in the nucleus. In Arabidopsis thaliana (Mouse-ear cress), this protein is B3 domain-containing protein REM13 (REM13).